Reading from the N-terminus, the 1281-residue chain is Dynactin subunit 1 (1281 aa).

The interval 1–25 is disordered; the sequence is MAQSKRHVYSRTPSGSRMSAEASAR. Residues 48–90 enclose the CAP-Gly domain; the sequence is GATLFATGKWVGVILDEAKGKNDGTVQGRKYFTCDEGHGIFVR. Positions 99 to 225 are disordered; that stretch reads DGADTTSPET…EEEGLRAQVR (127 aa). Positions 102-114 are enriched in polar residues; it reads DTTSPETPDSSAS. A phosphothreonine mark is found at Thr108, Thr145, Thr146, and Thr147. Residues 129-152 show a composition bias toward basic residues; that stretch reads SKLRGPKPKKAPTARKTTTRRPKP. Residues 161-205 show a composition bias toward low complexity; that stretch reads AGASSSLGPSGSASAGELSSSEPSTPAQTPLAAPIIPTPALTSPG. 2 positions are modified to phosphoserine: Ser179 and Ser212. The segment covering 214–225 has biased composition (basic and acidic residues); sequence SKEEEGLRAQVR. Coiled coils occupy residues 217-540 and 952-1043; these read EEGL…QQEA and IKEL…QSKR. The interaction with HPS6 stretch occupies residues 911–1281; sequence EYDAERPPSK…LHQLHDRLIS (371 aa). The segment at 1065–1084 is disordered; it reads GEEQQRGGAPGQAPGIVPGP.

This sequence belongs to the dynactin 150 kDa subunit family. Monomer and homodimer. Subunit of dynactin, a multiprotein complex part of a tripartite complex with dynein and a adapter, such as BICDL1, BICD2 or HOOK3. The dynactin complex is built around ACTR1A/ACTB filament and consists of an actin-related filament composed of a shoulder domain, a pointed end and a barbed end. Its length is defined by its flexible shoulder domain. The soulder is composed of 2 DCTN1 subunits, 4 DCTN2 and 2 DCTN3. DCTN1/p150(glued) binds directly to microtubules and to cytoplasmic dynein. The 4 DCNT2 (via N-terminus) bind the ACTR1A filament and act as molecular rulers to determine the length. The pointed end is important for binding dynein-dynactin cargo adapters. Consists of 4 subunits: ACTR10, DCNT4, DCTN5 and DCTN6. The barbed end is composed of a CAPZA1:CAPZB heterodimers, which binds ACTR1A/ACTB filament and dynactin and stabilizes dynactin. Interacts with the C-terminus of MAPRE1, MAPRE2 and MAPRE3. Interacts (via C-terminus) with SNX6. Interacts with CLN3, DYNAP, ECPAS and FBXL5. Interacts with MISP; this interaction regulates its distribution at the cell cortex. Interacts with CEP131. Interacts with CEP126. Interacts with CLIP1. Interacts with dynein intermediate chain and dynein heavy chain. Interacts with PLK1 (via POLO-box domain). Interacts with TBCB. Binds preferentially to tyrosinated microtubules than to detyrosinated microtubules. Interacts with PARD6A. Interacts with HPS6. Interacts with KIF3A. Interacts with BICD2. Interacts with DST (isoform 9). Interacts with DST (isoform 1). Identified in a complex with MREG and RILP. Interacts with BCCIP (isoform 2/alpha). Interacts with DCDC1. Interacts with AKNA. Interacts with DYNC1I2. Interacts with RUFY3 and RUFY4. In terms of processing, ubiquitinated by a SCF complex containing FBXL5, leading to its degradation by the proteasome. Phosphorylation by SLK at Thr-145, Thr-146 and Thr-147 targets DCTN1 to the centrosome. It is uncertain if SLK phosphorylates all three threonines or one or two of them. PLK1-mediated phosphorylation at Ser-179 is essential for its localization in the nuclear envelope, promotes its dissociation from microtubules during early mitosis and positively regulates nuclear envelope breakdown during prophase.

Its subcellular location is the cytoplasm. The protein resides in the cytoskeleton. The protein localises to the microtubule organizing center. It is found in the centrosome. It localises to the centriole. Its subcellular location is the spindle. The protein resides in the nucleus envelope. The protein localises to the cell cortex. Its function is as follows. Part of the dynactin complex that activates the molecular motor dynein for ultra-processive transport along microtubules. Plays a key role in dynein-mediated retrograde transport of vesicles and organelles along microtubules by recruiting and tethering dynein to microtubules. Binds to both dynein and microtubules providing a link between specific cargos, microtubules and dynein. Essential for targeting dynein to microtubule plus ends, recruiting dynein to membranous cargos and enhancing dynein processivity (the ability to move along a microtubule for a long distance without falling off the track). Can also act as a brake to slow the dynein motor during motility along the microtubule. Can regulate microtubule stability by promoting microtubule formation, nucleation and polymerization and by inhibiting microtubule catastrophe in neurons. Inhibits microtubule catastrophe by binding both to microtubules and to tubulin, leading to enhanced microtubule stability along the axon. Plays a role in metaphase spindle orientation. Plays a role in centriole cohesion and subdistal appendage organization and function. Its recruitment to the centriole in a KIF3A-dependent manner is essential for the maintenance of centriole cohesion and the formation of subdistal appendage. Also required for microtubule anchoring at the mother centriole. Plays a role in primary cilia formation. This is Dynactin subunit 1 (DCTN1) from Sus scrofa (Pig).